Consider the following 131-residue polypeptide: Small ribosomal subunit protein bS6 (131 aa).

The interval 92-131 (RVDEHKDGPSVQMQKRDERERGDRGDRGERRERRDRDDRN) is disordered.

Belongs to the bacterial ribosomal protein bS6 family.

Binds together with bS18 to 16S ribosomal RNA. This is Small ribosomal subunit protein bS6 from Paracoccus denitrificans (strain Pd 1222).